The following is a 59-amino-acid chain: Large ribosomal subunit protein uL30 (59 aa).

The protein belongs to the universal ribosomal protein uL30 family. As to quaternary structure, part of the 50S ribosomal subunit.

The protein is Large ribosomal subunit protein uL30 of Proteus mirabilis (strain HI4320).